The chain runs to 276 residues: Homeobox protein TOS8 (276 aa).

The segment covering 176 to 185 (NSVRGSNNGY) has biased composition (polar residues). The disordered stretch occupies residues 176–199 (NSVRGSNNGYSAKEKKHKAHGKRS). The segment covering 189–199 (EKKHKAHGKRS) has biased composition (basic residues). A DNA-binding region (homeobox; TALE-type) is located at residues 194–256 (AHGKRSNLPK…NARRRKIFSG (63 aa)).

Belongs to the TALE/CUP9 homeobox family.

It localises to the nucleus. This Saccharomyces cerevisiae (strain ATCC 204508 / S288c) (Baker's yeast) protein is Homeobox protein TOS8 (TOS8).